The sequence spans 324 residues: Phospho-N-acetylmuramoyl-pentapeptide-transferase (324 aa).

10 consecutive transmembrane segments (helical) span residues 5-25 (VILF…PIFI), 55-75 (GGLM…DIFF), 81-101 (TYML…DDFI), 122-142 (LIAL…VVSI), 147-167 (VSLD…VGGS), 176-196 (LDGL…VLAW), 203-223 (VAIF…FNAH), 227-247 (VFMG…IAIL), 250-270 (LEIL…SVII), and 302-322 (VVVT…YIEV).

It belongs to the glycosyltransferase 4 family. MraY subfamily. Requires Mg(2+) as cofactor.

The protein localises to the cell membrane. It carries out the reaction UDP-N-acetyl-alpha-D-muramoyl-L-alanyl-gamma-D-glutamyl-meso-2,6-diaminopimeloyl-D-alanyl-D-alanine + di-trans,octa-cis-undecaprenyl phosphate = di-trans,octa-cis-undecaprenyl diphospho-N-acetyl-alpha-D-muramoyl-L-alanyl-D-glutamyl-meso-2,6-diaminopimeloyl-D-alanyl-D-alanine + UMP. It functions in the pathway cell wall biogenesis; peptidoglycan biosynthesis. Catalyzes the initial step of the lipid cycle reactions in the biosynthesis of the cell wall peptidoglycan: transfers peptidoglycan precursor phospho-MurNAc-pentapeptide from UDP-MurNAc-pentapeptide onto the lipid carrier undecaprenyl phosphate, yielding undecaprenyl-pyrophosphoryl-MurNAc-pentapeptide, known as lipid I. This Anoxybacillus flavithermus (strain DSM 21510 / WK1) protein is Phospho-N-acetylmuramoyl-pentapeptide-transferase.